Consider the following 512-residue polypeptide: ETS translocation variant 3 (512 aa).

The segment at residues 35–116 (IQLWHFILEL…KGKRFTYKFN (82 aa)) is a DNA-binding region (ETS). The interval 138–196 (QSAPPVPTASSRFHFPPLDTHSPTSDVQPGRFSASSLTASGQESSNGTDRKAELSXLED) is disordered. 3 positions are modified to phosphoserine: Ser-139, Ser-159, and Ser-315. Over residues 158–184 (HSPTSDVQPGRFSASSLTASGQESSNG) the composition is skewed to polar residues. The disordered stretch occupies residues 341–512 (QFSIKLQPPP…QGLATAAADA (172 aa)). Over residues 380–406 (IKVEPASEKDAESLRQSAREKEEHTXE) the composition is skewed to basic and acidic residues. Lys-381 participates in a covalent cross-link: Glycyl lysine isopeptide (Lys-Gly) (interchain with G-Cter in SUMO2). Residue Lys-388 is modified to N6-acetyllysine; alternate. A Glycyl lysine isopeptide (Lys-Gly) (interchain with G-Cter in SUMO2); alternate cross-link involves residue Lys-388. Residues 443-452 (EPLEVTEDIE) show a composition bias toward acidic residues. 2 stretches are compositionally biased toward basic and acidic residues: residues 453–468 (DRPG…KEDA) and 479–491 (RWND…ELSK).

The protein belongs to the ETS family.

Its subcellular location is the nucleus. In terms of biological role, transcriptional repressor that contribute to growth arrest during terminal macrophage differentiation by repressing target genes involved in Ras-dependent proliferation. Represses MMP1 promoter activity. The chain is ETS translocation variant 3 (ETV3) from Ateles geoffroyi (Black-handed spider monkey).